The sequence spans 360 residues: UDP-N-acetylglucosamine--N-acetylmuramyl-(pentapeptide) pyrophosphoryl-undecaprenol N-acetylglucosamine transferase (360 aa).

Residues Ser198 and Gln289 each contribute to the UDP-N-acetyl-alpha-D-glucosamine site.

This sequence belongs to the glycosyltransferase 28 family. MurG subfamily.

The protein localises to the cell membrane. It catalyses the reaction Mur2Ac(oyl-L-Ala-gamma-D-Glu-L-Lys-D-Ala-D-Ala)-di-trans,octa-cis-undecaprenyl diphosphate + UDP-N-acetyl-alpha-D-glucosamine = beta-D-GlcNAc-(1-&gt;4)-Mur2Ac(oyl-L-Ala-gamma-D-Glu-L-Lys-D-Ala-D-Ala)-di-trans,octa-cis-undecaprenyl diphosphate + UDP + H(+). The protein operates within cell wall biogenesis; peptidoglycan biosynthesis. Its function is as follows. Cell wall formation. Catalyzes the transfer of a GlcNAc subunit on undecaprenyl-pyrophosphoryl-MurNAc-pentapeptide (lipid intermediate I) to form undecaprenyl-pyrophosphoryl-MurNAc-(pentapeptide)GlcNAc (lipid intermediate II). In Streptococcus pyogenes serotype M5 (strain Manfredo), this protein is UDP-N-acetylglucosamine--N-acetylmuramyl-(pentapeptide) pyrophosphoryl-undecaprenol N-acetylglucosamine transferase.